The following is a 338-amino-acid chain: Electron transfer flavoprotein subunit alpha (338 aa).

275 to 303 (IYIACAISGAIQPLAGMTGSDCIIAINKD) is an FAD binding site.

It belongs to the ETF alpha-subunit/FixB family. Heterodimer of an alpha and a beta subunit. Requires FAD as cofactor.

Functionally, the electron transfer flavoprotein serves as a specific electron acceptor for other dehydrogenases. It transfers the electrons to the main respiratory chain via ETF-ubiquinone oxidoreductase (ETF dehydrogenase). The sequence is that of Electron transfer flavoprotein subunit alpha (etfA) from Megasphaera elsdenii.